The chain runs to 152 residues: D-aminoacyl-tRNA deacylase (152 aa).

The Gly-cisPro motif, important for rejection of L-amino acids motif lies at 142–143; the sequence is GP.

The protein belongs to the DTD family. Homodimer.

The protein localises to the cytoplasm. It catalyses the reaction glycyl-tRNA(Ala) + H2O = tRNA(Ala) + glycine + H(+). The enzyme catalyses a D-aminoacyl-tRNA + H2O = a tRNA + a D-alpha-amino acid + H(+). In terms of biological role, an aminoacyl-tRNA editing enzyme that deacylates mischarged D-aminoacyl-tRNAs. Also deacylates mischarged glycyl-tRNA(Ala), protecting cells against glycine mischarging by AlaRS. Acts via tRNA-based rather than protein-based catalysis; rejects L-amino acids rather than detecting D-amino acids in the active site. By recycling D-aminoacyl-tRNA to D-amino acids and free tRNA molecules, this enzyme counteracts the toxicity associated with the formation of D-aminoacyl-tRNA entities in vivo and helps enforce protein L-homochirality. This Burkholderia mallei (strain NCTC 10247) protein is D-aminoacyl-tRNA deacylase.